Here is a 219-residue protein sequence, read N- to C-terminus: Lipoprotein-releasing system ATP-binding protein LolD (219 aa).

Residues 5 to 219 (LKAGDIFKTY…KVVMQDGVII (215 aa)) enclose the ABC transporter domain. An ATP-binding site is contributed by 37 to 44 (GASGAGKS).

Belongs to the ABC transporter superfamily. Lipoprotein translocase (TC 3.A.1.125) family. The complex is composed of two ATP-binding proteins (LolD) and two transmembrane proteins (LolC and LolE).

Its subcellular location is the cell inner membrane. In terms of biological role, part of the ABC transporter complex LolCDE involved in the translocation of mature outer membrane-directed lipoproteins, from the inner membrane to the periplasmic chaperone, LolA. Responsible for the formation of the LolA-lipoprotein complex in an ATP-dependent manner. The polypeptide is Lipoprotein-releasing system ATP-binding protein LolD (Cytophaga hutchinsonii (strain ATCC 33406 / DSM 1761 / CIP 103989 / NBRC 15051 / NCIMB 9469 / D465)).